A 388-amino-acid chain; its full sequence is MAKKPKKLEEISKKFGAEREKALNDALKLIEKDFGKGSIMRLGERAEQKVQVMSSGSLALDIALGSGGYPKGRIIEIYGPESSGKTTVALHAVAQAQKEGGIAAFIDAEHALDPAYAAALGVNIDELLLSQPDSGEQGLEIAGKLIDSGAVDLVVVDSVAALVPRAEIDGDIGDSHVGLQARMMSQAMRKLGASINKTKTIAIFINQLREKVGVMFGNPETTPGGRALKFYASVRLDVRGNTQIKGTGDQKETNVGKETKIKVVKNKVAPPFKEAVVEIMYGEGISKTGELLKIASDLDIIKKAGAWYSYKDEKIGQGSENAKKYLAEHPEIFDEIDKQVRSKFGLIDGEEVSEQDTENKKDEPKKEEAVNEEVPLDLGDELEIEIEE.

79 to 86 (GPESSGKT) serves as a coordination point for ATP. Positions 347-388 (IDGEEVSEQDTENKKDEPKKEEAVNEEVPLDLGDELEIEIEE) are disordered. The segment covering 357–369 (TENKKDEPKKEEA) has biased composition (basic and acidic residues). A compositionally biased stretch (acidic residues) spans 370–388 (VNEEVPLDLGDELEIEIEE).

Belongs to the RecA family.

The protein resides in the cytoplasm. Functionally, can catalyze the hydrolysis of ATP in the presence of single-stranded DNA, the ATP-dependent uptake of single-stranded DNA by duplex DNA, and the ATP-dependent hybridization of homologous single-stranded DNAs. It interacts with LexA causing its activation and leading to its autocatalytic cleavage. In Streptococcus pneumoniae (strain Hungary19A-6), this protein is Protein RecA.